The chain runs to 189 residues: Peptidyl-tRNA hydrolase (189 aa).

Y15 contacts tRNA. H20 (proton acceptor) is an active-site residue. TRNA-binding residues include Y65, N67, and N113.

It belongs to the PTH family. In terms of assembly, monomer.

It localises to the cytoplasm. The catalysed reaction is an N-acyl-L-alpha-aminoacyl-tRNA + H2O = an N-acyl-L-amino acid + a tRNA + H(+). Functionally, hydrolyzes ribosome-free peptidyl-tRNAs (with 1 or more amino acids incorporated), which drop off the ribosome during protein synthesis, or as a result of ribosome stalling. Its function is as follows. Catalyzes the release of premature peptidyl moieties from peptidyl-tRNA molecules trapped in stalled 50S ribosomal subunits, and thus maintains levels of free tRNAs and 50S ribosomes. In Caldicellulosiruptor saccharolyticus (strain ATCC 43494 / DSM 8903 / Tp8T 6331), this protein is Peptidyl-tRNA hydrolase.